The chain runs to 510 residues: 2-isopropylmalate synthase (510 aa).

The 263-residue stretch at 5-267 folds into the Pyruvate carboxyltransferase domain; it reads LVIFDTTLRD…DTRIDTTQIV (263 aa). Asp14, His202, His204, and Asn238 together coordinate Mn(2+). Residues 392-510 form a regulatory domain region; that stretch reads RLLSLHAVSE…SSLERTHPQI (119 aa).

Belongs to the alpha-IPM synthase/homocitrate synthase family. LeuA type 1 subfamily. Homodimer. Mn(2+) serves as cofactor.

It localises to the cytoplasm. It catalyses the reaction 3-methyl-2-oxobutanoate + acetyl-CoA + H2O = (2S)-2-isopropylmalate + CoA + H(+). The protein operates within amino-acid biosynthesis; L-leucine biosynthesis; L-leucine from 3-methyl-2-oxobutanoate: step 1/4. Catalyzes the condensation of the acetyl group of acetyl-CoA with 3-methyl-2-oxobutanoate (2-ketoisovalerate) to form 3-carboxy-3-hydroxy-4-methylpentanoate (2-isopropylmalate). This Nitrosomonas europaea (strain ATCC 19718 / CIP 103999 / KCTC 2705 / NBRC 14298) protein is 2-isopropylmalate synthase.